The following is a 648-amino-acid chain: Probable alpha-galactosidase D (648 aa).

An N-terminal signal peptide occupies residues 1 to 17 (MESIVWLLLLSPALVAG). Asn84 and Asn90 each carry an N-linked (GlcNAc...) asparagine glycan. The cysteines at positions 123 and 156 are disulfide-linked. Residue Asp154 is the Nucleophile of the active site. Position 199 to 203 (199 to 203 (EWGID)) interacts with substrate. Asp221 acts as the Proton donor in catalysis. N-linked (GlcNAc...) asparagine glycosylation is found at Asn339, Asn505, and Asn572.

Belongs to the glycosyl hydrolase 27 family.

Its subcellular location is the secreted. The catalysed reaction is Hydrolysis of terminal, non-reducing alpha-D-galactose residues in alpha-D-galactosides, including galactose oligosaccharides, galactomannans and galactolipids.. Its function is as follows. Hydrolyzes a variety of simple alpha-D-galactoside as well as more complex molecules such as oligosaccharides and polysaccharides. This chain is Probable alpha-galactosidase D (aglD), found in Neosartorya fischeri (strain ATCC 1020 / DSM 3700 / CBS 544.65 / FGSC A1164 / JCM 1740 / NRRL 181 / WB 181) (Aspergillus fischerianus).